Reading from the N-terminus, the 348-residue chain is Dihydroorotase (348 aa).

Zn(2+) contacts are provided by H14 and H16. Substrate contacts are provided by residues 16 to 18 (HLR) and N42. Positions 100, 137, and 175 each coordinate Zn(2+). Position 100 is an N6-carboxylysine (K100). H137 contacts substrate. L220 is a substrate binding site. Zn(2+) is bound at residue D248. Residue D248 is part of the active site. Residues H252 and A264 each contribute to the substrate site.

The protein belongs to the metallo-dependent hydrolases superfamily. DHOase family. Class II DHOase subfamily. As to quaternary structure, homodimer. Requires Zn(2+) as cofactor.

It carries out the reaction (S)-dihydroorotate + H2O = N-carbamoyl-L-aspartate + H(+). The protein operates within pyrimidine metabolism; UMP biosynthesis via de novo pathway; (S)-dihydroorotate from bicarbonate: step 3/3. Catalyzes the reversible cyclization of carbamoyl aspartate to dihydroorotate. The protein is Dihydroorotase of Pseudomonas fluorescens (strain ATCC BAA-477 / NRRL B-23932 / Pf-5).